We begin with the raw amino-acid sequence, 371 residues long: o-succinylbenzoate synthase (371 aa).

Lys164 functions as the Proton donor in the catalytic mechanism. The Mg(2+) site is built by Asp189, Glu214, and Asp239. Lys263 acts as the Proton acceptor in catalysis.

Belongs to the mandelate racemase/muconate lactonizing enzyme family. MenC type 2 subfamily. Requires a divalent metal cation as cofactor.

The enzyme catalyses (1R,6R)-6-hydroxy-2-succinyl-cyclohexa-2,4-diene-1-carboxylate = 2-succinylbenzoate + H2O. It functions in the pathway quinol/quinone metabolism; 1,4-dihydroxy-2-naphthoate biosynthesis; 1,4-dihydroxy-2-naphthoate from chorismate: step 4/7. Its pathway is quinol/quinone metabolism; menaquinone biosynthesis. In terms of biological role, converts 2-succinyl-6-hydroxy-2,4-cyclohexadiene-1-carboxylate (SHCHC) to 2-succinylbenzoate (OSB). Does not show detectable N-acylamino acid racemase (NAAAR) activity with N-acetyl-S-methionine as substrate. This is o-succinylbenzoate synthase from Bacillus subtilis (strain 168).